A 380-amino-acid polypeptide reads, in one-letter code: Cytochrome b (380 aa).

Helical transmembrane passes span 34–54 (FGSL…LLAM), 78–99 (WLIR…YLHI), 114–134 (WNTG…GYVL), and 179–199 (FFAL…IHLT). His84 and His98 together coordinate heme b. Positions 183 and 197 each coordinate heme b. His202 contacts a ubiquinone. Helical transmembrane passes span 227–247 (LKDI…ALFS), 289–309 (LGGV…PLLH), 321–341 (LSQL…WVGS), and 348–368 (FIII…ILLP).

Belongs to the cytochrome b family. As to quaternary structure, the cytochrome bc1 complex contains 11 subunits: 3 respiratory subunits (MT-CYB, CYC1 and UQCRFS1), 2 core proteins (UQCRC1 and UQCRC2) and 6 low-molecular weight proteins (UQCRH/QCR6, UQCRB/QCR7, UQCRQ/QCR8, UQCR10/QCR9, UQCR11/QCR10 and a cleavage product of UQCRFS1). This cytochrome bc1 complex then forms a dimer. Requires heme b as cofactor.

It is found in the mitochondrion inner membrane. In terms of biological role, component of the ubiquinol-cytochrome c reductase complex (complex III or cytochrome b-c1 complex) that is part of the mitochondrial respiratory chain. The b-c1 complex mediates electron transfer from ubiquinol to cytochrome c. Contributes to the generation of a proton gradient across the mitochondrial membrane that is then used for ATP synthesis. This is Cytochrome b (MT-CYB) from Pelagodroma marina (White-faced storm-petrel).